The following is a 278-amino-acid chain: Probable velvet family sexual development regulator SCHCODRAFT_28806 (278 aa).

Residues 51–255 (GRTIRASLDE…ARVGVRLSVR (205 aa)) form the Velvet domain. Residues 257–278 (TGKKATTKRRKRSDSFDEDDSS) are disordered.

It belongs to the velvet family.

It is found in the nucleus. Velvet-domain-containing protein that probably acts as a positive regulator of sexual development. The sequence is that of Probable velvet family sexual development regulator SCHCODRAFT_28806 from Schizophyllum commune (strain H4-8 / FGSC 9210) (Split gill fungus).